Reading from the N-terminus, the 401-residue chain is Argininosuccinate synthase (401 aa).

Position 8–16 (8–16) interacts with ATP; it reads AYSGGLDTS. Tyr85 provides a ligand contact to L-citrulline. Gly115 contacts ATP. L-aspartate-binding residues include Thr117, Asn121, and Asp122. Position 121 (Asn121) interacts with L-citrulline. 5 residues coordinate L-citrulline: Arg125, Ser173, Ser182, Glu258, and Tyr270.

It belongs to the argininosuccinate synthase family. Type 1 subfamily. Homotetramer.

Its subcellular location is the cytoplasm. The catalysed reaction is L-citrulline + L-aspartate + ATP = 2-(N(omega)-L-arginino)succinate + AMP + diphosphate + H(+). The protein operates within amino-acid biosynthesis; L-arginine biosynthesis; L-arginine from L-ornithine and carbamoyl phosphate: step 2/3. In Staphylococcus saprophyticus subsp. saprophyticus (strain ATCC 15305 / DSM 20229 / NCIMB 8711 / NCTC 7292 / S-41), this protein is Argininosuccinate synthase.